The sequence spans 409 residues: Argininosuccinate synthase (409 aa).

ATP-binding positions include 11–19 and A38; that span reads AYSGGLDTS. The L-citrulline site is built by Y91 and S96. Position 121 (G121) interacts with ATP. The L-aspartate site is built by T123, N127, and D128. N127 contacts L-citrulline. Positions 131, 182, 191, 267, and 279 each coordinate L-citrulline.

Belongs to the argininosuccinate synthase family. Type 1 subfamily. As to quaternary structure, homotetramer.

The protein resides in the cytoplasm. It carries out the reaction L-citrulline + L-aspartate + ATP = 2-(N(omega)-L-arginino)succinate + AMP + diphosphate + H(+). Its pathway is amino-acid biosynthesis; L-arginine biosynthesis; L-arginine from L-ornithine and carbamoyl phosphate: step 2/3. The polypeptide is Argininosuccinate synthase (Nitrobacter hamburgensis (strain DSM 10229 / NCIMB 13809 / X14)).